A 250-amino-acid polypeptide reads, in one-letter code: 5'-nucleotidase SurE (250 aa).

A divalent metal cation is bound by residues Asp-8, Asp-9, Ser-39, and Asn-91.

This sequence belongs to the SurE nucleotidase family. The cofactor is a divalent metal cation.

It localises to the cytoplasm. It catalyses the reaction a ribonucleoside 5'-phosphate + H2O = a ribonucleoside + phosphate. Its function is as follows. Nucleotidase that shows phosphatase activity on nucleoside 5'-monophosphates. The sequence is that of 5'-nucleotidase SurE from Syntrophotalea carbinolica (strain DSM 2380 / NBRC 103641 / GraBd1) (Pelobacter carbinolicus).